We begin with the raw amino-acid sequence, 375 residues long: Growth/differentiation factor 8 (375 aa).

Positions 1–18 (MQKLQISVYIYLFMLIVA) are cleaved as a signal peptide. Residues 19-266 (GPVDLNEKSE…VTDTPKRSRR (248 aa)) constitute a propeptide that is removed on maturation. 2 N-linked (GlcNAc...) asparagine glycosylation sites follow: Asn47 and Asn71. 4 cysteine pairs are disulfide-bonded: Cys272–Cys282, Cys281–Cys340, Cys309–Cys372, and Cys313–Cys374.

This sequence belongs to the TGF-beta family. In terms of assembly, homodimer; disulfide-linked. Interacts with WFIKKN2, leading to inhibit its activity. Interacts with FSTL3. Synthesized as large precursor molecule that undergoes proteolytic cleavage to generate an N-terminal propeptide and a disulfide linked C-terminal dimer, which is the biologically active molecule. The circulating form consists of a latent complex of the C-terminal dimer and other proteins, including its propeptide, which maintain the C-terminal dimer in a latent, inactive state. Ligand activation requires additional cleavage of the prodomain by a tolloid-like metalloproteinase.

Its subcellular location is the secreted. In terms of biological role, acts specifically as a negative regulator of skeletal muscle growth. The protein is Growth/differentiation factor 8 (MSTN) of Taurotragus derbianus (Giant eland).